The sequence spans 92 residues: Long neurotoxin 3FTx-Oxy2 (92 aa).

A signal peptide spans 1-21 (MKTLLLTLVVVTIVCLDLGYT). 4 disulfides stabilise this stretch: C24-C42, C35-C63, C67-C79, and C80-C85.

The protein belongs to the three-finger toxin family. Long-chain subfamily. Type II alpha-neurotoxin sub-subfamily. As to expression, expressed by the venom gland.

It localises to the secreted. Functionally, binds with high affinity to muscular (alpha-1/CHRNA1) and neuronal (alpha-7/CHRNA7) nicotinic acetylcholine receptor (nAChR) and inhibits acetylcholine from binding to the receptor, thereby impairing neuromuscular and neuronal transmission. The chain is Long neurotoxin 3FTx-Oxy2 from Oxyuranus microlepidotus (Inland taipan).